The primary structure comprises 641 residues: Epsin-2 (641 aa).

Residues R8, K11, R25, N30, R63, and H73 each contribute to the a 1,2-diacyl-sn-glycero-3-phospho-(1D-myo-inositol-4,5-bisphosphate) site. The region spanning 12-144 (NIVNNYSEAE…KDEERLKAER (133 aa)) is the ENTH domain. Phosphoserine is present on residues R153 and Q156. Over residues 163–181 (SNQITFGRGSSQPNLSTSH) the composition is skewed to polar residues. Disordered regions lie at residues 163-214 (SNQI…GAPL) and 255-275 (RATS…TSGE). Position 170 is an omega-N-methylarginine (R170). A phosphoserine mark is found at S173, S192, and S195. The segment covering 259-273 (PRVSSELEQARPQTS) has biased composition (polar residues). UIM domains are found at residues 275-294 (EEEL…AEQE) and 300-319 (GDDL…TVKI). Positions 340–425 (ALPSSGPAAQ…QPASSAGKRA (86 aa)) are disordered. 6 tandem repeats follow at residues 352–354 (EPW), 364–366 (NPW), 377–379 (DPW), 391–393 (DPW), 409–411 (DPW), and 427–429 (DAW). A 6 X 3 AA repeats of [DE]-P-W region spans residues 352–639 (EPWGPSASTN…AQATGTTNPF (288 aa)). A compositionally biased stretch (low complexity) spans 408–421 (SDPWAASQQPASSA). Residues 470–512 (TAESVTSLPSQNNGTTSPDPFESQPLTVASSKPSSARKTPESF) form a disordered region. A compositionally biased stretch (polar residues) spans 472–506 (ESVTSLPSQNNGTTSPDPFESQPLTVASSKPSSAR). A Phosphoserine modification is found at S486. At T508 the chain carries Phosphothreonine. A run of 2 repeats spans residues 537-539 (NPF) and 552-554 (NPF). Positions 537–639 (NPFLAPGAPA…AQATGTTNPF (103 aa)) are 3 X 3 AA repeats of N-P-F. Residue S570 is modified to Phosphoserine. Repeat 3 spans residues 637-639 (NPF).

The protein belongs to the epsin family. Binds EPS15. Interacts with ITSN1. Binds AP-2 and clathrin. Interacts with UBQLN2. In terms of processing, ubiquitinated. In terms of tissue distribution, highest expression is found in brain. Detected at lower levels in lung and liver.

It is found in the cytoplasm. It localises to the cytoplasmic vesicle. Its subcellular location is the clathrin-coated vesicle. Plays a role in the formation of clathrin-coated invaginations and endocytosis. This Homo sapiens (Human) protein is Epsin-2 (EPN2).